A 408-amino-acid polypeptide reads, in one-letter code: Succinylornithine transaminase (408 aa).

Lysine 252 bears the N6-(pyridoxal phosphate)lysine mark.

The protein belongs to the class-III pyridoxal-phosphate-dependent aminotransferase family. AstC subfamily. Pyridoxal 5'-phosphate is required as a cofactor.

It catalyses the reaction N(2)-succinyl-L-ornithine + 2-oxoglutarate = N-succinyl-L-glutamate 5-semialdehyde + L-glutamate. It functions in the pathway amino-acid degradation; L-arginine degradation via AST pathway; L-glutamate and succinate from L-arginine: step 3/5. Functionally, catalyzes the transamination of N(2)-succinylornithine and alpha-ketoglutarate into N(2)-succinylglutamate semialdehyde and glutamate. Can also act as an acetylornithine aminotransferase. In Salmonella dublin (strain CT_02021853), this protein is Succinylornithine transaminase.